Here is a 525-residue protein sequence, read N- to C-terminus: Signal recognition particle protein (525 aa).

Residues 107–114 (GLQGSGKT), 196–200 (DTAGR), and 254–257 (TKLD) each bind GTP. Positions 437–525 (GMGIPGIGRK…LSKLKFPGKK (89 aa)) are disordered. A compositionally biased stretch (basic residues) spans 447-467 (SATRKSKGAKGKSGKKSKKGT). Positions 480–497 (GVPGMPGLAGLPGGLPDL) are enriched in low complexity.

Belongs to the GTP-binding SRP family. SRP54 subfamily. In terms of assembly, part of the signal recognition particle protein translocation system, which is composed of SRP and FtsY.

Its subcellular location is the cytoplasm. The enzyme catalyses GTP + H2O = GDP + phosphate + H(+). Functionally, involved in targeting and insertion of nascent membrane proteins into the cytoplasmic membrane. Binds to the hydrophobic signal sequence of the ribosome-nascent chain (RNC) as it emerges from the ribosomes. The SRP-RNC complex is then targeted to the cytoplasmic membrane where it interacts with the SRP receptor FtsY. In Mycobacterium bovis (strain ATCC BAA-935 / AF2122/97), this protein is Signal recognition particle protein.